The sequence spans 330 residues: Phosphate acyltransferase (330 aa).

Belongs to the PlsX family. As to quaternary structure, homodimer. Probably interacts with PlsY.

It is found in the cytoplasm. It carries out the reaction a fatty acyl-[ACP] + phosphate = an acyl phosphate + holo-[ACP]. It participates in lipid metabolism; phospholipid metabolism. Catalyzes the reversible formation of acyl-phosphate (acyl-PO(4)) from acyl-[acyl-carrier-protein] (acyl-ACP). This enzyme utilizes acyl-ACP as fatty acyl donor, but not acyl-CoA. In Streptococcus agalactiae serotype Ia (strain ATCC 27591 / A909 / CDC SS700), this protein is Phosphate acyltransferase.